Reading from the N-terminus, the 160-residue chain is Protein-export protein SecB (160 aa).

The protein belongs to the SecB family. In terms of assembly, homotetramer, a dimer of dimers. One homotetramer interacts with 1 SecA dimer.

It is found in the cytoplasm. In terms of biological role, one of the proteins required for the normal export of preproteins out of the cell cytoplasm. It is a molecular chaperone that binds to a subset of precursor proteins, maintaining them in a translocation-competent state. It also specifically binds to its receptor SecA. The chain is Protein-export protein SecB from Agrobacterium fabrum (strain C58 / ATCC 33970) (Agrobacterium tumefaciens (strain C58)).